We begin with the raw amino-acid sequence, 233 residues long: Metallo-beta-lactamase domain-containing protein 1 (233 aa).

Zn(2+) is bound by residues H96, H98, D100, H101, H152, D174, and H213.

It belongs to the metallo-beta-lactamase superfamily. Glyoxalase II family. Homodimer. Requires Zn(2+) as cofactor.

The protein resides in the cytoplasm. It localises to the cytosol. Its subcellular location is the nucleus. The catalysed reaction is a ribonucleotidyl-ribonucleotide-RNA + H2O = a 3'-end ribonucleotide-RNA + a 5'-end 5'-phospho-ribonucleoside-RNA + H(+). Functionally, endoribonuclease that catalyzes the hydrolysis of histone-coding pre-mRNA 3'-end. Involved in histone pre-mRNA processing during the S-phase of the cell cycle, which is required for entering/progressing through S-phase. Cleaves histone pre-mRNA at a major and a minor cleavage site after the 5'-ACCCA-3' and the 5'-ACCCACA-3' sequence, respectively, and located downstream of the stem-loop. May require the presence of the HDE element located at the histone pre-RNA 3'-end to avoid non-specific cleavage. The polypeptide is Metallo-beta-lactamase domain-containing protein 1 (mblac1) (Xenopus laevis (African clawed frog)).